A 358-amino-acid polypeptide reads, in one-letter code: Phospho-N-acetylmuramoyl-pentapeptide-transferase (358 aa).

Helical transmembrane passes span 27–47, 81–101, 106–126, 147–167, 171–191, 201–221, 228–248, 255–275, 278–298, and 336–356; these read LFNN…SLFA, MGGV…TINL, LFLL…DDYL, VISI…PLVI, SWVI…LVGI, LDGL…TEIL, LFVF…FLKY, IFMG…IALL, SVFT…SVII, and IVEN…VLKI.

It belongs to the glycosyltransferase 4 family. MraY subfamily. The cofactor is Mg(2+).

It is found in the cell inner membrane. The catalysed reaction is UDP-N-acetyl-alpha-D-muramoyl-L-alanyl-gamma-D-glutamyl-meso-2,6-diaminopimeloyl-D-alanyl-D-alanine + di-trans,octa-cis-undecaprenyl phosphate = di-trans,octa-cis-undecaprenyl diphospho-N-acetyl-alpha-D-muramoyl-L-alanyl-D-glutamyl-meso-2,6-diaminopimeloyl-D-alanyl-D-alanine + UMP. It participates in cell wall biogenesis; peptidoglycan biosynthesis. Its function is as follows. Catalyzes the initial step of the lipid cycle reactions in the biosynthesis of the cell wall peptidoglycan: transfers peptidoglycan precursor phospho-MurNAc-pentapeptide from UDP-MurNAc-pentapeptide onto the lipid carrier undecaprenyl phosphate, yielding undecaprenyl-pyrophosphoryl-MurNAc-pentapeptide, known as lipid I. This is Phospho-N-acetylmuramoyl-pentapeptide-transferase from Prochlorococcus marinus (strain MIT 9215).